The sequence spans 205 residues: Bacterial microcompartment protein trimer-1 (205 aa).

A disordered region spans residues 1 to 20; sequence MDHAPERFDATPPAGEPDRP. 2 consecutive BMC domains span residues 21-106 and 120-204; these read ALGV…RFLD and SVII…GRLF.

This sequence belongs to the bacterial microcompartments protein family. As to quaternary structure, homotrimerizes to form a pseudohexamer. Unlike its paralogs BMC-T2 and BMC-T3, the pseudohexamers do not stack. The concave side faces outward, with the N- and C-terminii exposed to the cytoplasm.

The protein localises to the bacterial microcompartment. In terms of biological role, a minor component of the bacterial microcompartment (BMC) shell. Expression of 5 proteins in E.coli (BMC-H (Hoch_5815), BMC-P (Hoch_5814), and 3 BMC-T (Hoch_5812, Hoch_5816, Hoch_3341)) forms 40 nm artificial BMCs with a molecular mass of 6.5 MDa. This protein does not form stacked pseudohexamers in the BMC. There are 20 BMC-T pseudohexamers per BMC, composed of mixed BMC-T1, BMC-T2 and BMC-T3. The shell facets are 20-30 Angstroms thick, with 1 of BMC-T trimers protruding to the exterior. The chain is Bacterial microcompartment protein trimer-1 from Haliangium ochraceum (strain DSM 14365 / JCM 11303 / SMP-2).